Here is a 493-residue protein sequence, read N- to C-terminus: Vinyl phenol reductase (493 aa).

FAD contacts are provided by alanine 19, glutamate 38, serine 46, threonine 50, glycine 52, alanine 156, aspartate 224, asparagine 448, and valine 467.

Belongs to the FAD-dependent oxidoreductase 2 family. FRD/SDH subfamily. FAD is required as a cofactor.

It carries out the reaction 4-vinylphenol + NADH + H(+) = 4-ethylphenol + NAD(+). The catalysed reaction is 3,4-dihydroxystyrene + NADH + H(+) = 4-ethylcatechol + NAD(+). It catalyses the reaction 2-methoxy-4-vinylphenol + NADH + H(+) = 4-ethyl-2-methoxyphenol + NAD(+). Involved in the production of ethylphenols during the degradation of hydroxycinnamic acids. Catalyzes the reduction of vinylphenols (4-vinylphenol (4-hydroxystyrene), 4-vinylcatechol (3,4-dihydroxystyrene), and 4-vinylguaiacol (2-methoxy-4-vinylphenol)) to their corresponding ethylphenols (4-ethylphenol, 4-ethylcatechol, and 4-ethylguaiacol, respectively) in the presence of NADH. These compounds are considered the most important flavor components of fermented soy sauce, and, on the other hand, are considered off flavor and responsible for sensorial wine and cider alteration. The 4-ethylphenol produced by the gut bacteria L.plantarum strain WCFS1 can get subsequent sulfation to 4-ethylphenyl sulfate (4EPS) by host sulfotransferase (SULT1A1); 4EPS can enter the brain and seems to alter brain activity. Therefore, this enzyme likely plays a role in gut microbiota-host metabolic interactions. This chain is Vinyl phenol reductase, found in Lactiplantibacillus plantarum (strain ATCC BAA-793 / NCIMB 8826 / WCFS1) (Lactobacillus plantarum).